Consider the following 279-residue polypeptide: NADPH-dependent 7-cyano-7-deazaguanine reductase (279 aa).

Substrate is bound at residue 86–88 (IES). 88–89 (SK) is an NADPH binding site. The active-site Thioimide intermediate is the cysteine 187. The Proton donor role is filled by aspartate 194. A substrate-binding site is contributed by 226 to 227 (HE). 255-256 (RG) provides a ligand contact to NADPH.

Belongs to the GTP cyclohydrolase I family. QueF type 2 subfamily. Homodimer.

The protein localises to the cytoplasm. The enzyme catalyses 7-aminomethyl-7-carbaguanine + 2 NADP(+) = 7-cyano-7-deazaguanine + 2 NADPH + 3 H(+). It participates in tRNA modification; tRNA-queuosine biosynthesis. Its function is as follows. Catalyzes the NADPH-dependent reduction of 7-cyano-7-deazaguanine (preQ0) to 7-aminomethyl-7-deazaguanine (preQ1). The protein is NADPH-dependent 7-cyano-7-deazaguanine reductase of Haemophilus influenzae (strain ATCC 51907 / DSM 11121 / KW20 / Rd).